The chain runs to 488 residues: Altronate oxidoreductase (488 aa).

18–29 lines the NAD(+) pocket; the sequence is VIQFGEGNFLRA.

This sequence belongs to the mannitol dehydrogenase family. UxaB subfamily.

It carries out the reaction D-altronate + NAD(+) = keto-D-tagaturonate + NADH + H(+). It participates in carbohydrate metabolism; pentose and glucuronate interconversion. The chain is Altronate oxidoreductase from Pectobacterium atrosepticum (strain SCRI 1043 / ATCC BAA-672) (Erwinia carotovora subsp. atroseptica).